We begin with the raw amino-acid sequence, 74 residues long: Putative sulfur carrier protein NMA0882 (74 aa).

The active-site Cysteine persulfide intermediate is cysteine 13.

It belongs to the sulfur carrier protein TusA family.

The protein is Putative sulfur carrier protein NMA0882 of Neisseria meningitidis serogroup A / serotype 4A (strain DSM 15465 / Z2491).